Reading from the N-terminus, the 349-residue chain is Phenylalanine--tRNA ligase alpha subunit (349 aa).

Glu-264 provides a ligand contact to Mg(2+).

The protein belongs to the class-II aminoacyl-tRNA synthetase family. Phe-tRNA synthetase alpha subunit type 1 subfamily. In terms of assembly, tetramer of two alpha and two beta subunits. It depends on Mg(2+) as a cofactor.

It localises to the cytoplasm. The enzyme catalyses tRNA(Phe) + L-phenylalanine + ATP = L-phenylalanyl-tRNA(Phe) + AMP + diphosphate + H(+). This is Phenylalanine--tRNA ligase alpha subunit from Myxococcus xanthus (strain DK1622).